Here is a 60-residue protein sequence, read N- to C-terminus: MKDTILILFTAFIALLGFFGMSAEALADPLADPSAGPNAEADPEAINLKAIAALVKKVLG.

The first 27 residues, 1-27 (MKDTILILFTAFIALLGFFGMSAEALA), serve as a signal peptide directing secretion. 4 AXPX repeats span residues 27–30 (ADPL), 31–34 (ADPS), 35–38 (AGPN), and 41–44 (ADPE). A propeptide spanning residues 28–45 (DPLADPSAGPNAEADPEA) is cleaved from the precursor. L59 is modified (leucine amide).

This sequence belongs to the MCD family. Mastoparan subfamily. In terms of tissue distribution, expressed by the venom gland.

It localises to the secreted. The protein resides in the target cell membrane. Functionally, mast cell degranulating peptide. Its mast cell degranulation activity may be related to the activation of G-protein coupled receptors in mast cells as well as interaction with other proteins located in cell endosomal membranes in the mast cells. Has a membranolytic activity on human glioblastoma multiforme cells (brain tumor cells) that leads to cell necrosis. This Vespa orientalis (Oriental hornet) protein is Mastoparan.